A 26-amino-acid polypeptide reads, in one-letter code: Fumarylacetoacetate hydrolase domain-containing protein 2A (26 aa).

This sequence belongs to the FAH family. Requires Ca(2+) as cofactor. Mg(2+) serves as cofactor.

In terms of biological role, may have hydrolase activity. This is Fumarylacetoacetate hydrolase domain-containing protein 2A from Mesocricetus auratus (Golden hamster).